The primary structure comprises 335 residues: Tetraacyldisaccharide 4'-kinase (335 aa).

59 to 66 (TAGGNGKT) lines the ATP pocket.

This sequence belongs to the LpxK family.

The catalysed reaction is a lipid A disaccharide + ATP = a lipid IVA + ADP + H(+). The protein operates within glycolipid biosynthesis; lipid IV(A) biosynthesis; lipid IV(A) from (3R)-3-hydroxytetradecanoyl-[acyl-carrier-protein] and UDP-N-acetyl-alpha-D-glucosamine: step 6/6. Its function is as follows. Transfers the gamma-phosphate of ATP to the 4'-position of a tetraacyldisaccharide 1-phosphate intermediate (termed DS-1-P) to form tetraacyldisaccharide 1,4'-bis-phosphate (lipid IVA). The protein is Tetraacyldisaccharide 4'-kinase of Vibrio parahaemolyticus serotype O3:K6 (strain RIMD 2210633).